The sequence spans 220 residues: NADH-quinone oxidoreductase subunit I (220 aa).

2 4Fe-4S ferredoxin-type domains span residues 71–102 (LQRLLDSGSERCIGCGLCEKICTSNCIRIITH) and 112–141 (DSYTINLGRCIYCGLCAEVCPELAIVMGNR). Residues cysteine 82, cysteine 85, cysteine 88, cysteine 92, cysteine 121, cysteine 124, cysteine 127, and cysteine 131 each contribute to the [4Fe-4S] cluster site. The disordered stretch occupies residues 187-220 (MQATPLDYVQEPSKEESKEESPTSPESHKGDENV). Residues 198-220 (PSKEESKEESPTSPESHKGDENV) are compositionally biased toward basic and acidic residues.

This sequence belongs to the complex I 23 kDa subunit family. As to quaternary structure, NDH-1 is composed of 14 different subunits. Subunits NuoA, H, J, K, L, M, N constitute the membrane sector of the complex. It depends on [4Fe-4S] cluster as a cofactor.

The protein resides in the cell inner membrane. The enzyme catalyses a quinone + NADH + 5 H(+)(in) = a quinol + NAD(+) + 4 H(+)(out). Functionally, NDH-1 shuttles electrons from NADH, via FMN and iron-sulfur (Fe-S) centers, to quinones in the respiratory chain. The immediate electron acceptor for the enzyme in this species is believed to be ubiquinone. Couples the redox reaction to proton translocation (for every two electrons transferred, four hydrogen ions are translocated across the cytoplasmic membrane), and thus conserves the redox energy in a proton gradient. This is NADH-quinone oxidoreductase subunit I from Helicobacter pylori (strain J99 / ATCC 700824) (Campylobacter pylori J99).